The primary structure comprises 165 residues: Crossover junction endodeoxyribonuclease RuvC (165 aa).

Catalysis depends on residues Asp7, Glu66, and Asp138. Asp7, Glu66, and Asp138 together coordinate Mg(2+).

This sequence belongs to the RuvC family. In terms of assembly, homodimer which binds Holliday junction (HJ) DNA. The HJ becomes 2-fold symmetrical on binding to RuvC with unstacked arms; it has a different conformation from HJ DNA in complex with RuvA. In the full resolvosome a probable DNA-RuvA(4)-RuvB(12)-RuvC(2) complex forms which resolves the HJ. Requires Mg(2+) as cofactor.

Its subcellular location is the cytoplasm. It catalyses the reaction Endonucleolytic cleavage at a junction such as a reciprocal single-stranded crossover between two homologous DNA duplexes (Holliday junction).. The RuvA-RuvB-RuvC complex processes Holliday junction (HJ) DNA during genetic recombination and DNA repair. Endonuclease that resolves HJ intermediates. Cleaves cruciform DNA by making single-stranded nicks across the HJ at symmetrical positions within the homologous arms, yielding a 5'-phosphate and a 3'-hydroxyl group; requires a central core of homology in the junction. The consensus cleavage sequence is 5'-(A/T)TT(C/G)-3'. Cleavage occurs on the 3'-side of the TT dinucleotide at the point of strand exchange. HJ branch migration catalyzed by RuvA-RuvB allows RuvC to scan DNA until it finds its consensus sequence, where it cleaves and resolves the cruciform DNA. The sequence is that of Crossover junction endodeoxyribonuclease RuvC from Ruegeria pomeroyi (strain ATCC 700808 / DSM 15171 / DSS-3) (Silicibacter pomeroyi).